The primary structure comprises 371 residues: Cytoplasmic tRNA 2-thiolation protein 1 (371 aa).

This sequence belongs to the TtcA family. CTU1/NCS6/ATPBD3 subfamily.

It is found in the cytoplasm. The protein operates within tRNA modification; 5-methoxycarbonylmethyl-2-thiouridine-tRNA biosynthesis. Plays a central role in 2-thiolation of mcm(5)S(2)U at tRNA wobble positions of tRNA(Lys), tRNA(Glu) and tRNA(Gln). Directly binds tRNAs and probably acts by catalyzing adenylation of tRNAs, an intermediate required for 2-thiolation. It is unclear whether it acts as a sulfurtransferase that transfers sulfur from thiocarboxylated URM1 onto the uridine of tRNAs at wobble position. Prior mcm(5) tRNA modification by the elongator complex is required for 2-thiolation. May also be involved in protein urmylation. The polypeptide is Cytoplasmic tRNA 2-thiolation protein 1 (Kluyveromyces lactis (strain ATCC 8585 / CBS 2359 / DSM 70799 / NBRC 1267 / NRRL Y-1140 / WM37) (Yeast)).